Consider the following 294-residue polypeptide: Probable endonuclease 4 (294 aa).

9 residues coordinate Zn(2+): H71, H111, E148, D182, H185, H217, D230, H232, and E262.

It belongs to the AP endonuclease 2 family. Zn(2+) serves as cofactor.

The enzyme catalyses Endonucleolytic cleavage to 5'-phosphooligonucleotide end-products.. Endonuclease IV plays a role in DNA repair. It cleaves phosphodiester bonds at apurinic or apyrimidinic (AP) sites, generating a 3'-hydroxyl group and a 5'-terminal sugar phosphate. In Acholeplasma laidlawii (strain PG-8A), this protein is Probable endonuclease 4.